The chain runs to 372 residues: Ciliary neurotrophic factor receptor subunit alpha (372 aa).

Positions 1–22 (MAAPVPWACCAVLAAAAAVVYA) are cleaved as a signal peptide. Residues 27–104 (PQEAPHVQYE…WHLRHQVLLH (78 aa)) enclose the Ig-like C2-type domain. C46 and C89 are oxidised to a cystine. N-linked (GlcNAc...) asparagine glycosylation is found at N60, N70, N142, and N190. 2 consecutive Fibronectin type-III domains span residues 108 to 205 (PPRE…VKPD) and 206 to 306 (PPEN…TEEP). A WSXWS motif motif is present at residues 290–294 (WSDWS). A disordered region spans residues 301–340 (PWTEEPRHLTTEAQAPETTTSTTSSLAPPPTTKICDPGEL). Residues 311–326 (TEAQAPETTTSTTSSL) show a composition bias toward low complexity. S342 is lipidated: GPI-anchor amidated serine. The propeptide at 343–372 (GGGPSAPFLIHVPVTLALAAAAATANSLLI) is removed in mature form.

It belongs to the type I cytokine receptor family. Type 3 subfamily. In terms of assembly, forms a heterotrimer with LIFR and IL6ST. Interacts with heterodimeric neurotropic cytokine composed of CLCF1/CLC and CRLF1/CLF-1. Either alone or in complex with the heterodimer CLCF1-CRLF1 interacts with SORL1; this interaction may promote internalization and lysosomal degradation. In terms of tissue distribution, expressed in retina, brain, spleen, lung, liver and kidney. In the retina it is highly expressed by photoreceptors, but also found in the RPE, inner nuclear layer and ganglion cells.

The protein localises to the cell membrane. In terms of biological role, binds to CNTF. The alpha subunit provides the receptor specificity. The sequence is that of Ciliary neurotrophic factor receptor subunit alpha (CNTFR) from Canis lupus familiaris (Dog).